The following is a 129-amino-acid chain: GEL complex subunit OPTI (129 aa).

The Cytoplasmic portion of the chain corresponds to Met-1–Val-44. A helical transmembrane segment spans residues Ile-45–Leu-65. A topological domain (lumenal) is located at residue Arg-66. A helical membrane pass occupies residues Gly-67 to Leu-84. The Cytoplasmic segment spans residues Tyr-85–Leu-103. A helical transmembrane segment spans residues Thr-104–His-127. Over Tyr-128–Asp-129 the chain is Lumenal.

It belongs to the EMC6 family. Component of the GET- and EMC-like (GEL) complex, composed of RAB5IF/OPTI and TMCO1. The GEL complex is part of the multi-pass translocon (MPT) complex, composed of three subcomplexes, the GEL complex (composed of RAB5IF/OPTI and TMCO1), the BOS complex (composed of NCLN/Nicalin, NOMO1 and TMEM147) and the PAT complex (composed of WDR83OS/Asterix and CCDC47). The MPT complex associates with the SEC61 complex. Interacts with NDUFS3, NDUFA4, NDUFV1, NDUFA9 and NDUFS8 of the mitochondrial membrane respiratory chain NADH dehydrogenase (Complex I). Interacts with UQCRC2 of the ubiquinol-cytochrome c reductase complex (Complex III). Interacts with COX5A and COX7C of the cytochrome c oxidase complex (Complex IV). As to expression, expressed in neuronal cells.

Its subcellular location is the endoplasmic reticulum membrane. The protein localises to the mitochondrion inner membrane. In terms of biological role, component of the multi-pass translocon (MPT) complex that mediates insertion of multi-pass membrane proteins into the lipid bilayer of membranes. The MPT complex takes over after the SEC61 complex: following membrane insertion of the first few transmembrane segments of proteins by the SEC61 complex, the MPT complex occludes the lateral gate of the SEC61 complex to promote insertion of subsequent transmembrane regions. Within the MPT complex, the GEL subcomplex may mediate insertion of transmembrane regions into the membrane. In addition to its role in multi-pass membrane insertion, RAB5IF/OPTI also acts as an assembly factor for mitochondrial respiratory complexes. This Mus musculus (Mouse) protein is GEL complex subunit OPTI.